A 273-amino-acid chain; its full sequence is Large ribosomal subunit protein uL2cz/uL2cy (273 aa).

Disordered regions lie at residues Met1–Ser24 and Asn224–Gly254.

The protein belongs to the universal ribosomal protein uL2 family. In terms of assembly, part of the 50S ribosomal subunit.

The protein localises to the plastid. It is found in the chloroplast. The polypeptide is Large ribosomal subunit protein uL2cz/uL2cy (rpl2-A) (Nymphaea alba (White water-lily)).